Reading from the N-terminus, the 385-residue chain is Lipid-A-disaccharide synthase (385 aa).

This sequence belongs to the LpxB family.

It carries out the reaction a lipid X + a UDP-2-N,3-O-bis[(3R)-3-hydroxyacyl]-alpha-D-glucosamine = a lipid A disaccharide + UDP + H(+). Its pathway is bacterial outer membrane biogenesis; LPS lipid A biosynthesis. Condensation of UDP-2,3-diacylglucosamine and 2,3-diacylglucosamine-1-phosphate to form lipid A disaccharide, a precursor of lipid A, a phosphorylated glycolipid that anchors the lipopolysaccharide to the outer membrane of the cell. The sequence is that of Lipid-A-disaccharide synthase from Pseudoalteromonas translucida (strain TAC 125).